A 362-amino-acid chain; its full sequence is dTDP-glucose 4,6-dehydratase (362 aa).

NAD(+) is bound by residues 11-12 (FI), 32-35 (DKLT), 58-59 (DI), 80-84 (LAAES), and threonine 99. Serine 84 provides a ligand contact to substrate. Position 133 (threonine 133) interacts with substrate. Aspartate 134 acts as the Proton donor in catalysis. Residues glutamate 135 and tyrosine 167 each act as proton acceptor in the active site. Residue 167 to 171 (YSASK) coordinates NAD(+). Asparagine 196 contributes to the substrate binding site. Asparagine 197 serves as a coordination point for NAD(+). Substrate contacts are provided by residues 206–207 (KL), 222–224 (PVY), arginine 231, asparagine 266, and 300–304 (DRPGH).

Belongs to the NAD(P)-dependent epimerase/dehydratase family. dTDP-glucose dehydratase subfamily. The cofactor is NAD(+).

It catalyses the reaction dTDP-alpha-D-glucose = dTDP-4-dehydro-6-deoxy-alpha-D-glucose + H2O. It functions in the pathway bacterial outer membrane biogenesis; LPS O-antigen biosynthesis. Catalyzes the dehydration of dTDP-D-glucose to form dTDP-4-dehydro-6-deoxy-D-glucose via a three-step process involving oxidation, dehydration and reduction. This reaction is a step in the biosynthesis of D-fucofuranose, a component of E.coli O52 O antigen. This is dTDP-glucose 4,6-dehydratase (rmlB) from Escherichia coli.